The following is a 153-amino-acid chain: Transcriptional repressor NrdR (153 aa).

A zinc finger lies at 3–34; it reads CPFCGHLEDRVIDSRAGGAGEVIRRRRECASC. Residues 49–139 enclose the ATP-cone domain; it reads PTVVKKDGRR…VYRSFRDIDQ (91 aa).

Belongs to the NrdR family. It depends on Zn(2+) as a cofactor.

Negatively regulates transcription of bacterial ribonucleotide reductase nrd genes and operons by binding to NrdR-boxes. The sequence is that of Transcriptional repressor NrdR from Sorangium cellulosum (strain So ce56) (Polyangium cellulosum (strain So ce56)).